The chain runs to 274 residues: Diaminopimelate epimerase (274 aa).

2 residues coordinate substrate: N11 and N62. Residue C71 is the Proton donor of the active site. Substrate contacts are provided by residues 72-73 (GN), N157, N190, and 208-209 (ER). Catalysis depends on C217, which acts as the Proton acceptor. 218-219 (GT) serves as a coordination point for substrate.

The protein belongs to the diaminopimelate epimerase family. As to quaternary structure, homodimer.

The protein localises to the cytoplasm. The enzyme catalyses (2S,6S)-2,6-diaminopimelate = meso-2,6-diaminopimelate. Its pathway is amino-acid biosynthesis; L-lysine biosynthesis via DAP pathway; DL-2,6-diaminopimelate from LL-2,6-diaminopimelate: step 1/1. Its function is as follows. Catalyzes the stereoinversion of LL-2,6-diaminopimelate (L,L-DAP) to meso-diaminopimelate (meso-DAP), a precursor of L-lysine and an essential component of the bacterial peptidoglycan. The chain is Diaminopimelate epimerase from Elusimicrobium minutum (strain Pei191).